The chain runs to 178 residues: Large ribosomal subunit protein uL6 (178 aa).

This sequence belongs to the universal ribosomal protein uL6 family. As to quaternary structure, part of the 50S ribosomal subunit.

This protein binds to the 23S rRNA, and is important in its secondary structure. It is located near the subunit interface in the base of the L7/L12 stalk, and near the tRNA binding site of the peptidyltransferase center. This chain is Large ribosomal subunit protein uL6, found in Leuconostoc mesenteroides subsp. mesenteroides (strain ATCC 8293 / DSM 20343 / BCRC 11652 / CCM 1803 / JCM 6124 / NCDO 523 / NBRC 100496 / NCIMB 8023 / NCTC 12954 / NRRL B-1118 / 37Y).